A 592-amino-acid polypeptide reads, in one-letter code: V-type ATP synthase alpha chain (592 aa).

Residue 233–240 (GPFGSGKT) coordinates ATP.

This sequence belongs to the ATPase alpha/beta chains family.

It catalyses the reaction ATP + H2O + 4 H(+)(in) = ADP + phosphate + 5 H(+)(out). In terms of biological role, produces ATP from ADP in the presence of a proton gradient across the membrane. The V-type alpha chain is a catalytic subunit. This Clostridium botulinum (strain Okra / Type B1) protein is V-type ATP synthase alpha chain.